The following is a 28-amino-acid chain: MCMLSWFISTSPLKEYCGGKRNLQRNNF.

This is an uncharacterized protein from Saccharomyces cerevisiae (strain ATCC 204508 / S288c) (Baker's yeast).